Here is a 365-residue protein sequence, read N- to C-terminus: Ribosomal RNA large subunit methyltransferase M (365 aa).

S-adenosyl-L-methionine is bound by residues serine 193, 226–229, aspartate 245, aspartate 265, and aspartate 282; that span reads CPGG. Lysine 311 acts as the Proton acceptor in catalysis.

The protein belongs to the class I-like SAM-binding methyltransferase superfamily. RNA methyltransferase RlmE family. RlmM subfamily. As to quaternary structure, monomer.

The protein localises to the cytoplasm. The catalysed reaction is cytidine(2498) in 23S rRNA + S-adenosyl-L-methionine = 2'-O-methylcytidine(2498) in 23S rRNA + S-adenosyl-L-homocysteine + H(+). Functionally, catalyzes the 2'-O-methylation at nucleotide C2498 in 23S rRNA. The polypeptide is Ribosomal RNA large subunit methyltransferase M (Alteromonas mediterranea (strain DSM 17117 / CIP 110805 / LMG 28347 / Deep ecotype)).